The chain runs to 660 residues: PAN2-PAN3 deadenylation complex subunit PAN3 (660 aa).

The C3H1-type zinc-finger motif lies at 7–36; that stretch reads SAKDTFCKNVLIYGYCKYENKGCAFSHTVK. Disordered stretches follow at residues 36–60 and 150–186; these read KPTS…TNAD and SPVM…PTSA. The span at 43-59 shows a compositional bias: low complexity; that stretch reads GSQGSNATTNSSGNTNA. The PABPC-interacting motif-2 (PAM-2) signature appears at 59–79; it reads ADMKKKFNFNTPSFQPSTVPN. The segment covering 150–159 has biased composition (polar residues); the sequence is SPVMAQSVST. The segment at 252–528 is pseudokinase domain; sequence QTLPRSNLPD…LQEFNRNHLS (277 aa). Residues Arg-304, 358–365, and 415–416 contribute to the ATP site; these read DYFPNSNT and SK. Positions 529–567 form a coiled coil; that stretch reads RRILNFCSNAQDSQDFMESQLSTELENARVFRLITKLNF. Positions 568–660 are knob domain; that stretch reads IIDRPEYDND…DSAFRTLTRG (93 aa).

Belongs to the protein kinase superfamily. PAN3 family. In terms of assembly, homodimer. Forms a heterotrimer with a catalytic subunit PAN2 to form the poly(A)-nuclease (PAN) deadenylation complex. Interacts (via PAM-2 motif) with poly(A)-binding protein PAB1 (via PABC domain), conferring substrate specificity of the enzyme complex.

The protein localises to the cytoplasm. Regulatory subunit of the poly(A)-nuclease (PAN) deadenylation complex, one of two cytoplasmic mRNA deadenylases involved in mRNA turnover. PAN specifically shortens poly(A) tails of RNA and the activity is stimulated by poly(A)-binding protein PAB1. PAN deadenylation is followed by rapid degradation of the shortened mRNA tails by the CCR4-NOT complex. Deadenylated mRNAs are then degraded by two alternative mechanisms, namely exosome-mediated 3'-5' exonucleolytic degradation, or deadenylation-dependent mRNA decaping and subsequent 5'-3' exonucleolytic degradation by XRN1. May also be involved in post-transcriptional maturation of mRNA poly(A) tails. PAN3 acts as a positive regulator for PAN activity, recruiting the catalytic subunit PAN2 to mRNA via its interaction with RNA and with PAB1. This is PAN2-PAN3 deadenylation complex subunit PAN3 from Debaryomyces hansenii (strain ATCC 36239 / CBS 767 / BCRC 21394 / JCM 1990 / NBRC 0083 / IGC 2968) (Yeast).